Reading from the N-terminus, the 404-residue chain is WD repeat and SOCS box-containing protein 2 (404 aa).

WD repeat units lie at residues 16–55, 81–140, 144–183, 188–226, 230–268, 283–322, and 325–362; these read GRPH…LIPW, GSPK…IWEV, LLLL…IWDL, KQIQ…LWSM, TLIR…MWDP, DPAM…IWAL, and KTPI…FWTA. Positions 68–87 are disordered; sequence AKSRSSKNETKGRGSPKEKT. In terms of domain architecture, SOCS box spans 356–404; the sequence is HVQFWTAPRVLSSLKHLCRKALRSFLTTYQVLALPIPKKMKEFLTYRTF.

Its pathway is protein modification; protein ubiquitination. Functionally, may be a substrate-recognition component of a SCF-like ECS (Elongin-Cullin-SOCS-box protein) E3 ubiquitin ligase complex which mediates the ubiquitination and subsequent proteasomal degradation of target proteins. The polypeptide is WD repeat and SOCS box-containing protein 2 (WSB2) (Homo sapiens (Human)).